We begin with the raw amino-acid sequence, 314 residues long: Lysophospholipase D GDPD1 (314 aa).

Over 1-3 (MSS) the chain is Extracellular. Residues 4 to 24 (TAAFYLLSTLGGYLVTSFLLL) traverse the membrane as a helical segment. The Cytoplasmic segment spans residues 25–195 (KYPTLLHQRK…VEKCYKENSD (171 aa)). In terms of domain architecture, GP-PDE spans 40-309 (SKHISHRGGA…DYPTKLRDFL (270 aa)). A divalent metal cation contacts are provided by Glu-72, Asp-74, and His-87. Residues 196 to 216 (IPILFSLQRVLLILGLFFTGL) form a helical membrane-spanning segment. At 217-314 (LPFVPIREQF…LRDFLHNFSA (98 aa)) the chain is on the extracellular side.

It belongs to the glycerophosphoryl diester phosphodiesterase family. As to expression, widely expressed with high expression level in testis.

Its subcellular location is the cytoplasm. The protein resides in the membrane. The protein localises to the perinuclear region. It is found in the endoplasmic reticulum. It catalyses the reaction a 1-O-alkyl-sn-glycero-3-phosphocholine + H2O = a 1-O-alkyl-sn-glycero-3-phosphate + choline + H(+). The catalysed reaction is 1-hexadecanoyl-sn-glycero-3-phosphocholine + H2O = 1-hexadecanoyl-sn-glycero-3-phosphate + choline + H(+). It carries out the reaction N-hexadecanoyl-sn-glycero-3-phosphoethanolamine + H2O = N-hexadecanoylethanolamine + sn-glycerol 3-phosphate + H(+). The enzyme catalyses N-(5Z,8Z,11Z,14Z-eicosatetraenoyl)-1-(9Z-octadecenoyl)-sn-glycero-3-phosphoethanolamine + H2O = N-(5Z,8Z,11Z,14Z-eicosatetraenoyl)-ethanolamine + 1-(9Z-octadecenoyl)-sn-glycero-3-phosphate + H(+). It catalyses the reaction N,1-di-(9Z-octadecenoyl)-sn-glycero-3-phosphoethanolamine + H2O = N-(9Z-octadecenoyl) ethanolamine + 1-(9Z-octadecenoyl)-sn-glycero-3-phosphate + H(+). The catalysed reaction is N-hexadecanoyl-1-(9Z-octadecenoyl)-sn-glycero-3-phosphoethanolamine + H2O = N-hexadecanoylethanolamine + 1-(9Z-octadecenoyl)-sn-glycero-3-phosphate + H(+). It carries out the reaction 1-O-(1Z-octadecenyl)-sn-glycero-3-phospho-N-hexadecanoyl-ethanolamine + H2O = 1-O-(1Z-octadecenyl)-sn-glycero-3-phosphate + N-hexadecanoylethanolamine + H(+). The enzyme catalyses 1-hexadecanoyl-sn-glycero-3-phosphoethanolamine + H2O = 1-hexadecanoyl-sn-glycero-3-phosphate + ethanolamine + H(+). It catalyses the reaction 1-O-hexadecyl-sn-glycero-3-phosphocholine + H2O = 1-O-hexadecyl-sn-glycero-3-phosphate + choline + H(+). The catalysed reaction is 1-(9Z-octadecenoyl)-sn-glycero-3-phosphocholine + H2O = 1-(9Z-octadecenoyl)-sn-glycero-3-phosphate + choline + H(+). It carries out the reaction N,1-dihexadecanoyl-sn-glycero-3-phosphoethanolamine + H2O = N-hexadecanoylethanolamine + 1-hexadecanoyl-sn-glycero-3-phosphate + H(+). The enzyme catalyses 1-O-(1Z-octadecenyl)-sn-glycero-3-phospho-(N-5Z,8Z,11Z,14Z-eicosatetraenoyl)-ethanolamine + H2O = 1-O-(1Z-octadecenyl)-sn-glycero-3-phosphate + N-(5Z,8Z,11Z,14Z-eicosatetraenoyl)-ethanolamine + H(+). It catalyses the reaction 1-O-(1Z-octadecenyl)-sn-glycero-3-phospho-(N-9Z-octadecenoyl)-ethanolamine + H2O = 1-O-(1Z-octadecenyl)-sn-glycero-3-phosphate + N-(9Z-octadecenoyl) ethanolamine + H(+). Lysophospholipase D activity is increased by magnesium and manganese and inhibited by calcium in a concentration dependent manner. Loss of lysophospholipase D activity by addition of EDTA. In terms of biological role, hydrolyzes lysoglycerophospholipids to produce lysophosphatidic acid (LPA) and the corresponding amines. Shows a preference for 1-O-alkyl-sn-glycero-3-phosphocholine (lyso-PAF), lysophosphatidylethanolamine (lyso-PE) and lysophosphatidylcholine (lyso-PC). May be involved in bioactive N-acylethanolamine biosynthesis from both N-acyl-lysoplasmenylethanolamin (N-acyl-lysoPlsEt) and N-acyl-lysophosphatidylethanolamin (N-acyl-lysoPE). In addition, hydrolyzes glycerophospho-N-acylethanolamine to N-acylethanolamine. Does not display glycerophosphodiester phosphodiesterase activity, since it cannot hydrolyze either glycerophosphoinositol or glycerophosphocholine. This chain is Lysophospholipase D GDPD1, found in Homo sapiens (Human).